The chain runs to 39 residues: Large ribosomal subunit protein bL36 (39 aa).

This sequence belongs to the bacterial ribosomal protein bL36 family.

This Limosilactobacillus reuteri (strain DSM 20016) (Lactobacillus reuteri) protein is Large ribosomal subunit protein bL36.